A 463-amino-acid polypeptide reads, in one-letter code: Methionine aminopeptidase 2-2 (463 aa).

The segment at 1–97 is disordered; that stretch reads MGSKSPEGHW…TLSVTELKQT (97 aa). Residues 27-36 are compositionally biased toward polar residues; the sequence is DPQTSQNGSG. The segment covering 46–57 has biased composition (acidic residues); it reads GDDDDDDEDAEE. The segment covering 69–85 has biased composition (basic residues); that stretch reads KKKKRKKSNKKKKKKTK. Over residues 86 to 97 the composition is skewed to polar residues; that stretch reads SGTLSVTELKQT. H215 contacts substrate. A divalent metal cation-binding residues include D236, D247, and H316. Substrate is bound at residue H324. Residues E349 and E444 each coordinate a divalent metal cation.

This sequence belongs to the peptidase M24A family. Methionine aminopeptidase eukaryotic type 2 subfamily. The cofactor is Co(2+). Zn(2+) is required as a cofactor. Requires Mn(2+) as cofactor. Fe(2+) serves as cofactor.

The protein localises to the cytoplasm. It catalyses the reaction Release of N-terminal amino acids, preferentially methionine, from peptides and arylamides.. In terms of biological role, cotranslationally removes the N-terminal methionine from nascent proteins. The N-terminal methionine is often cleaved when the second residue in the primary sequence is small and uncharged (Met-Ala-, Cys, Gly, Pro, Ser, Thr, or Val). This Neosartorya fischeri (strain ATCC 1020 / DSM 3700 / CBS 544.65 / FGSC A1164 / JCM 1740 / NRRL 181 / WB 181) (Aspergillus fischerianus) protein is Methionine aminopeptidase 2-2.